A 151-amino-acid chain; its full sequence is Regulatory protein RecX (151 aa).

The protein belongs to the RecX family.

It is found in the cytoplasm. Functionally, modulates RecA activity. The protein is Regulatory protein RecX of Actinobacillus pleuropneumoniae serotype 5b (strain L20).